The primary structure comprises 415 residues: Elongation factor Tu, chloroplastic (415 aa).

Residues 13-217 form the tr-type G domain; sequence KIHLNVGTIG…HLDLYLPTPR (205 aa). The G1 stretch occupies residues 22–29; sequence GHFSHGKT. 22 to 29 serves as a coordination point for GTP; the sequence is GHFSHGKT. Thr29 is a binding site for Mg(2+). The tract at residues 63 to 67 is G2; sequence NMSIY. Residues 84–87 are G3; sequence DCPG. GTP-binding positions include 84 to 88 and 139 to 142; these read DCPGH and NKED. A G4 region spans residues 139–142; the sequence is NKED. The G5 stretch occupies residues 177 to 179; that stretch reads SAL.

It belongs to the TRAFAC class translation factor GTPase superfamily. Classic translation factor GTPase family. EF-Tu/EF-1A subfamily.

The protein resides in the plastid. Its subcellular location is the chloroplast. The enzyme catalyses GTP + H2O = GDP + phosphate + H(+). Its function is as follows. GTP hydrolase that promotes the GTP-dependent binding of aminoacyl-tRNA to the A-site of ribosomes during protein biosynthesis. In Coleochaete orbicularis (Charophycean green alga), this protein is Elongation factor Tu, chloroplastic (tufA).